A 1071-amino-acid polypeptide reads, in one-letter code: Carbamoyl phosphate synthase pyrimidine-specific large chain (1071 aa).

The carboxyphosphate synthetic domain stretch occupies residues 1 to 401 (MPKRVDINKI…SLLKAVRSLE (401 aa)). ATP-binding residues include Arg129, Arg169, Gly175, Gly176, Lys208, Ile210, Glu215, Gly241, Ile242, His243, Gln284, and Glu298. Positions 133 to 327 (RTLMNELNEP…IAKLAAKIAV (195 aa)) constitute an ATP-grasp 1 domain. Gln284, Glu298, and Asn300 together coordinate Mg(2+). 3 residues coordinate Mn(2+): Gln284, Glu298, and Asn300. Residues 402–546 (ADVYHLELKD…YSTYEEENES (145 aa)) form an oligomerization domain region. The tract at residues 547–929 (VVTDKKSVMV…ALYKALIASG (383 aa)) is carbamoyl phosphate synthetic domain. Positions 671 to 861 (EQALGELGVP…MANLATKIIL (191 aa)) constitute an ATP-grasp 2 domain. Positions 707, 746, 748, 752, 777, 778, 779, 780, 820, and 832 each coordinate ATP. Mg(2+) contacts are provided by Gln820, Glu832, and Asn834. Mn(2+) is bound by residues Gln820, Glu832, and Asn834. The 142-residue stretch at 930–1071 (IQIPNYGSVL…NTNQEAAVTI (142 aa)) folds into the MGS-like domain. The interval 930–1071 (IQIPNYGSVL…NTNQEAAVTI (142 aa)) is allosteric domain.

Belongs to the CarB family. As to quaternary structure, composed of two chains; the small (or glutamine) chain promotes the hydrolysis of glutamine to ammonia, which is used by the large (or ammonia) chain to synthesize carbamoyl phosphate. Tetramer of heterodimers (alpha,beta)4. Interacts with BrxC. It depends on Mg(2+) as a cofactor. The cofactor is Mn(2+).

It carries out the reaction hydrogencarbonate + L-glutamine + 2 ATP + H2O = carbamoyl phosphate + L-glutamate + 2 ADP + phosphate + 2 H(+). It catalyses the reaction hydrogencarbonate + NH4(+) + 2 ATP = carbamoyl phosphate + 2 ADP + phosphate + 2 H(+). Its pathway is amino-acid biosynthesis; L-arginine biosynthesis; carbamoyl phosphate from bicarbonate: step 1/1. It participates in pyrimidine metabolism; UMP biosynthesis via de novo pathway; (S)-dihydroorotate from bicarbonate: step 1/3. In terms of biological role, small subunit of the glutamine-dependent carbamoyl phosphate synthetase (CPSase). CPSase catalyzes the formation of carbamoyl phosphate from the ammonia moiety of glutamine, carbonate, and phosphate donated by ATP, constituting the first step of the biosynthetic pathway leading to pyrimidine nucleotides. The large subunit (synthetase) binds the substrates ammonia (free or transferred from glutamine from the small subunit), hydrogencarbonate and ATP and carries out an ATP-coupled ligase reaction, activating hydrogencarbonate by forming carboxy phosphate which reacts with ammonia to form carbamoyl phosphate. The polypeptide is Carbamoyl phosphate synthase pyrimidine-specific large chain (pyrAB) (Bacillus subtilis (strain 168)).